The following is a 121-amino-acid chain: Small ribosomal subunit protein uS13 (121 aa).

The tract at residues 92-121 is disordered; that stretch reads RKGLPCRGQRTRTNARTRKGPRKAAQSLKK.

It belongs to the universal ribosomal protein uS13 family. As to quaternary structure, part of the 30S ribosomal subunit. Forms a loose heterodimer with protein S19. Forms two bridges to the 50S subunit in the 70S ribosome.

Its function is as follows. Located at the top of the head of the 30S subunit, it contacts several helices of the 16S rRNA. In the 70S ribosome it contacts the 23S rRNA (bridge B1a) and protein L5 of the 50S subunit (bridge B1b), connecting the 2 subunits; these bridges are implicated in subunit movement. Contacts the tRNAs in the A and P-sites. The sequence is that of Small ribosomal subunit protein uS13 from Janthinobacterium sp. (strain Marseille) (Minibacterium massiliensis).